Here is a 305-residue protein sequence, read N- to C-terminus: N-acetylneuraminate lyase (305 aa).

Residues T51 and T52 each coordinate aceneuramate. Catalysis depends on Y143, which acts as the Proton donor. K173 acts as the Schiff-base intermediate with substrate in catalysis. T175, G197, D199, E200, and S216 together coordinate aceneuramate.

It belongs to the DapA family. NanA subfamily. Homotetramer.

The protein resides in the cytoplasm. It catalyses the reaction aceneuramate = aldehydo-N-acetyl-D-mannosamine + pyruvate. The protein operates within amino-sugar metabolism; N-acetylneuraminate degradation. Catalyzes the cleavage of N-acetylneuraminic acid (sialic acid) to form pyruvate and N-acetylmannosamine via a Schiff base intermediate. It prevents sialic acids from being recycled and returning to the cell surface. Involved in the N-glycolylneuraminic acid (Neu5Gc) degradation pathway. The chain is N-acetylneuraminate lyase from Xenopus tropicalis (Western clawed frog).